Reading from the N-terminus, the 685-residue chain is Probable serine/threonine-protein kinase CPE1738 (685 aa).

The Protein kinase domain occupies 10–275 (YELLQCVGEG…LEKIKKDPNV (266 aa)). ATP-binding positions include 16–24 (VGEGGMSFV) and K39. Catalysis depends on E143, which acts as the Proton acceptor. The disordered stretch occupies residues 277 to 339 (ISSKSAEDED…NIQTKPQKAI (63 aa)). Residues 306 to 329 (EPDEDDEDDDEYYEDDEDEDEEEN) show a composition bias toward acidic residues. 4 consecutive PASTA domains span residues 376–440 (GKDV…TVSG), 441–508 (GEGQ…TISK), 513–581 (KSET…TINY), and 589–648 (EKPK…TMEE). The tract at residues 480-500 (VPRGEVISQSPNANESVDKGS) is disordered. Positions 623–685 (DTAKVKSVSN…PKQPEQSGNN (63 aa)) are disordered. Composition is skewed to low complexity over residues 627 to 645 (VKSV…VSVT) and 654 to 685 (QPTQ…SGNN).

Belongs to the protein kinase superfamily. Ser/Thr protein kinase family.

It carries out the reaction L-seryl-[protein] + ATP = O-phospho-L-seryl-[protein] + ADP + H(+). The catalysed reaction is L-threonyl-[protein] + ATP = O-phospho-L-threonyl-[protein] + ADP + H(+). This Clostridium perfringens (strain 13 / Type A) protein is Probable serine/threonine-protein kinase CPE1738.